The chain runs to 156 residues: MSESSTFTTAVVPEGEGVAPMAETVQYYNSYSDASIASCAFVDSGKDKIDKTKLVTYTSRLAASPAYQKVVGVGLKTAAGSIVPYVRLDMDNTGKGIHFNATKLSDSSAKLAAVLKTTVSMTEAQRTQLYMEYIKGIENRSAQFIWDWWRTGKAPA.

A signal peptide spans 1–21; sequence MSESSTFTTAVVPEGEGVAPM. The active site involves H98. 2 N-linked (GlcNAc...) asparagine glycosylation sites follow: N100 and N139.

It belongs to the ribotoxin-like family. In terms of assembly, monomer. Mg(2+) serves as cofactor.

It localises to the vacuole lumen. The catalysed reaction is a 28S rRNA containing guanosine-adenosine pair + H2O = an [RNA fragment]-3'-adenosine-3'-phosphate + a 5'-a hydroxy-guanosine-3'-[RNA fragment].. With respect to regulation, in contrast to most ribotoxins, activity is completely inhibited by EDTA. Fungal ribonuclease involved in fungal defense. Highly specific and highly toxic fungal endonuclease that cleaves a single phosphodiester bond in the 28S RNA of eukaryotic ribosomes at a universally conserved GAGA tetraloop of the sarcin-ricin loop (SRL). The damage of the SRL inhibits the binding of translation elongation factors and halts protein biosynthesis, ultimately resulting in the death of the target cells. Shows antitumor activity. Exerts cytotoxicity and induces apoptosis towards rat glial cells and human glioma cells, and also displays some activity towards human neurolastoma cell lines. Shows a strong entomotoxicity against Aedes aegypti larvae, yet no nematotoxicity against nematodes. In Cyclocybe aegerita (Black poplar mushroom), this protein is Ribonuclease ageritin.